Here is a 150-residue protein sequence, read N- to C-terminus: 3-hydroxyacyl-[acyl-carrier-protein] dehydratase FabZ (150 aa).

Histidine 51 is an active-site residue.

The protein belongs to the thioester dehydratase family. FabZ subfamily.

Its subcellular location is the cytoplasm. The enzyme catalyses a (3R)-hydroxyacyl-[ACP] = a (2E)-enoyl-[ACP] + H2O. Involved in unsaturated fatty acids biosynthesis. Catalyzes the dehydration of short chain beta-hydroxyacyl-ACPs and long chain saturated and unsaturated beta-hydroxyacyl-ACPs. The chain is 3-hydroxyacyl-[acyl-carrier-protein] dehydratase FabZ from Geobacter sulfurreducens (strain ATCC 51573 / DSM 12127 / PCA).